The primary structure comprises 360 residues: NAD(P)H-quinone oxidoreductase subunit 1, chloroplastic (360 aa).

A run of 8 helical transmembrane segments spans residues 27–47, 98–118, 129–149, 165–185, 203–223, 253–273, 297–317, and 340–360; these read IWIF…VLVI, FSIG…VIPF, IGIF…LMSG, AAQS…ISLL, FWGW…ISSL, FGLF…FVTV, IFGT…FLFV, and FLLP…LFSL.

Belongs to the complex I subunit 1 family. As to quaternary structure, NDH is composed of at least 16 different subunits, 5 of which are encoded in the nucleus.

The protein resides in the plastid. The protein localises to the chloroplast thylakoid membrane. It catalyses the reaction a plastoquinone + NADH + (n+1) H(+)(in) = a plastoquinol + NAD(+) + n H(+)(out). The enzyme catalyses a plastoquinone + NADPH + (n+1) H(+)(in) = a plastoquinol + NADP(+) + n H(+)(out). NDH shuttles electrons from NAD(P)H:plastoquinone, via FMN and iron-sulfur (Fe-S) centers, to quinones in the photosynthetic chain and possibly in a chloroplast respiratory chain. The immediate electron acceptor for the enzyme in this species is believed to be plastoquinone. Couples the redox reaction to proton translocation, and thus conserves the redox energy in a proton gradient. This Arabidopsis thaliana (Mouse-ear cress) protein is NAD(P)H-quinone oxidoreductase subunit 1, chloroplastic.